A 351-amino-acid polypeptide reads, in one-letter code: Tropomodulin-2 (351 aa).

Ser25 bears the Phosphoserine mark.

Belongs to the tropomodulin family. As to quaternary structure, binds to the N-terminus of tropomyosin and to actin. As to expression, neuronal-tissue specific.

The protein localises to the cytoplasm. It localises to the cytoskeleton. In terms of biological role, blocks the elongation and depolymerization of the actin filaments at the pointed end. The Tmod/TM complex contributes to the formation of the short actin protofilament, which in turn defines the geometry of the membrane skeleton. The polypeptide is Tropomodulin-2 (TMOD2) (Homo sapiens (Human)).